The sequence spans 288 residues: Probable aquaporin PIP2-2 (288 aa).

Residues 1-21 (MAKDIEASAPEGGEFSAKDYT) are disordered. Helical transmembrane passes span 42-62 (AVIA…ATVI) and 81-101 (GVGI…LVYC). Positions 111–113 (NPA) match the NPA 1 motif. The next 3 membrane-spanning stretches (helical) occupy residues 130 to 150 (VLYI…VKGF), 172 to 192 (GTGL…VFSA), and 204 to 224 (IPVL…LATI). The short motif at 232–234 (NPA) is the NPA 2 element. The helical transmembrane segment at 254 to 274 (IFWVGPLIGAAIAAAYHQYVL) threads the bilayer.

This sequence belongs to the MIP/aquaporin (TC 1.A.8) family. PIP (TC 1.A.8.11) subfamily. In terms of tissue distribution, expressed in roots, leaves and anthers.

Its subcellular location is the cell membrane. Its function is as follows. Aquaporins facilitate the transport of water and small neutral solutes across cell membranes. This is Probable aquaporin PIP2-2 (PIP2-2) from Oryza sativa subsp. japonica (Rice).